The following is a 310-amino-acid chain: Aspartate carbamoyltransferase catalytic subunit (310 aa).

Residues arginine 54 and threonine 55 each coordinate carbamoyl phosphate. Residue lysine 84 coordinates L-aspartate. Arginine 105, histidine 134, and glutamine 137 together coordinate carbamoyl phosphate. 2 residues coordinate L-aspartate: arginine 167 and arginine 229. Carbamoyl phosphate is bound by residues leucine 267 and proline 268.

It belongs to the aspartate/ornithine carbamoyltransferase superfamily. ATCase family. In terms of assembly, heterododecamer (2C3:3R2) of six catalytic PyrB chains organized as two trimers (C3), and six regulatory PyrI chains organized as three dimers (R2).

The enzyme catalyses carbamoyl phosphate + L-aspartate = N-carbamoyl-L-aspartate + phosphate + H(+). The protein operates within pyrimidine metabolism; UMP biosynthesis via de novo pathway; (S)-dihydroorotate from bicarbonate: step 2/3. Its function is as follows. Catalyzes the condensation of carbamoyl phosphate and aspartate to form carbamoyl aspartate and inorganic phosphate, the committed step in the de novo pyrimidine nucleotide biosynthesis pathway. This chain is Aspartate carbamoyltransferase catalytic subunit, found in Enterobacter sp. (strain 638).